The primary structure comprises 491 residues: Argininosuccinate lyase (491 aa).

Belongs to the lyase 1 family. Argininosuccinate lyase subfamily.

Its subcellular location is the cytoplasm. The catalysed reaction is 2-(N(omega)-L-arginino)succinate = fumarate + L-arginine. Its pathway is amino-acid biosynthesis; L-arginine biosynthesis; L-arginine from L-ornithine and carbamoyl phosphate: step 3/3. The polypeptide is Argininosuccinate lyase (Methanosarcina barkeri (strain Fusaro / DSM 804)).